Consider the following 442-residue polypeptide: N-acetyl-S-alkylcysteine sulfoxide monooxygenase (442 aa).

FMN-binding residues include D58, T95, H145, Y149, S219, and S220.

This sequence belongs to the NtaA/SnaA/DszA monooxygenase family. In terms of assembly, homodimer.

The catalysed reaction is (R)-N-acetyl-S-benzyl-L-cysteine sulfoxide + FMNH2 + O2 = N-acetyl-S-hydroxy-L-cysteine + benzaldehyde + FMN + H2O + H(+). The protein operates within amino-acid metabolism. In terms of biological role, involved in a cysteine salvage pathway from S-alkylcysteine. Catalyzes the C-S bond cleavage in N-acetyl-S-benzyl-L-cysteine sulfoxide leading to N-acetyl-S-hydroxy-L-cysteine and benzaldehyde. This pathway is likely important in the catabolism of alkylated cysteine generated by proteolysis of alkylated glutathione formed in the detoxification of a wide range of electrophiles. Has much less efficient activity with N-acetyl-S-methyl-L-cysteine sulfoxide as substrate. Cannot use S-alkylated L-cysteine sulfones and ketone analogs as substrates, demonstrating that the sulfoxide is required for activity. The polypeptide is N-acetyl-S-alkylcysteine sulfoxide monooxygenase (Bacillus subtilis (strain 168)).